A 186-amino-acid polypeptide reads, in one-letter code: Crossover junction endodeoxyribonuclease RuvC (186 aa).

Residues D7, E73, and D145 contribute to the active site. Positions 7, 73, and 145 each coordinate Mg(2+).

It belongs to the RuvC family. In terms of assembly, homodimer which binds Holliday junction (HJ) DNA. The HJ becomes 2-fold symmetrical on binding to RuvC with unstacked arms; it has a different conformation from HJ DNA in complex with RuvA. In the full resolvosome a probable DNA-RuvA(4)-RuvB(12)-RuvC(2) complex forms which resolves the HJ. It depends on Mg(2+) as a cofactor.

The protein localises to the cytoplasm. The enzyme catalyses Endonucleolytic cleavage at a junction such as a reciprocal single-stranded crossover between two homologous DNA duplexes (Holliday junction).. Functionally, the RuvA-RuvB-RuvC complex processes Holliday junction (HJ) DNA during genetic recombination and DNA repair. Endonuclease that resolves HJ intermediates. Cleaves cruciform DNA by making single-stranded nicks across the HJ at symmetrical positions within the homologous arms, yielding a 5'-phosphate and a 3'-hydroxyl group; requires a central core of homology in the junction. The consensus cleavage sequence is 5'-(A/T)TT(C/G)-3'. Cleavage occurs on the 3'-side of the TT dinucleotide at the point of strand exchange. HJ branch migration catalyzed by RuvA-RuvB allows RuvC to scan DNA until it finds its consensus sequence, where it cleaves and resolves the cruciform DNA. This Acidovorax sp. (strain JS42) protein is Crossover junction endodeoxyribonuclease RuvC.